The sequence spans 92 residues: MSRSSKKGPYIEPSLMKKVQAMKAADKKKPIKTWSRRSTIFPDFVGLNFEVHNGKSFVNVYVTEDMIGHKLGEFAQTRTFKQHTSNRKDLAK.

This sequence belongs to the universal ribosomal protein uS19 family.

Its function is as follows. Protein S19 forms a complex with S13 that binds strongly to the 16S ribosomal RNA. The sequence is that of Small ribosomal subunit protein uS19 from Malacoplasma penetrans (strain HF-2) (Mycoplasma penetrans).